The following is a 306-amino-acid chain: Acetaldehyde dehydrogenase 3 (306 aa).

The Acyl-thioester intermediate role is filled by Cys-131. Residues 162–170 and Asn-273 each bind NAD(+); that span reads SVGPGTRKN.

Belongs to the acetaldehyde dehydrogenase family.

The catalysed reaction is acetaldehyde + NAD(+) + CoA = acetyl-CoA + NADH + H(+). The polypeptide is Acetaldehyde dehydrogenase 3 (Burkholderia lata (strain ATCC 17760 / DSM 23089 / LMG 22485 / NCIMB 9086 / R18194 / 383)).